A 291-amino-acid polypeptide reads, in one-letter code: Transcription factor TYE7 (291 aa).

The tract at residues Phe89–Ser109 is disordered. Residues Ser96 to Ser109 are compositionally biased toward low complexity. Ser104 carries the phosphoserine modification. Residues Phe180–Leu265 form the bHLH domain. His185, Glu189, and Arg193 together coordinate DNA. Residues Asp221 to Thr245 form a disordered region. Residues Thr233–Thr245 show a composition bias toward low complexity. A Phosphothreonine modification is found at Thr237.

Homodimer. Efficient DNA binding requires dimerization with another bHLH protein.

It localises to the nucleus. In terms of biological role, transcriptional activator of glycolytic gene expression, such as enolase genes (ENO1 and ENO2), glyceraldehyde-3-phosphate dehydrogenase gene (TDH), phosphoglycerate kinase (PGK1), phosphoglycerate mutase (PGM1), pyruvate kinase (PYK1) and triosephosphate isomerase (TPI1) genes. Binds DNA on E-box motifs: 5'-CANNTG-3'. In response to adenylic nucleotide reduction, activates Ty1 mRNA transcription, possibly by controlling Ty1 antisense transcription. Acts as a cell cycle transcription factor. Its function may also be linked to sulfur metabolism and the cross-regulation between phosphate and sulfate metabolism. This is Transcription factor TYE7 from Saccharomyces cerevisiae (strain ATCC 204508 / S288c) (Baker's yeast).